Reading from the N-terminus, the 201-residue chain is MNPEYDYLFKLLLIGDSGVGKSCLLLRFADDTYTESYISTIGVDFKIRTIELDGKTIKLQIWDTAGQERFRTITSSYYRGAHGIIVVYDVTDQESYANVKQWLQEIDRYASENVNKLLVGNKSDLTTKKVVDNTTAKEFADSLGIPFLETSAKNATNVEQAFMTMAAEIKKRMGPGAASGGERPNLKIDSTPVKPAGGGCC.

Methionine 1 is subject to N-acetylmethionine. GTP is bound by residues serine 17, glycine 18, valine 19, glycine 20, lysine 21, serine 22, cysteine 23, tyrosine 33, threonine 34, glutamate 35, serine 36, serine 39, and threonine 40. Serine 22 contributes to the Mg(2+) binding site. Residues 30–45 (DDTYTESYISTIGVDF) carry the Switch 1 motif. Positions 40 and 63 each coordinate Mg(2+). The segment at 64–83 (TAGQERFRTITSSYYRGAHG) is switch 2 region; required for interaction with REP1/CHM. The Switch 2 signature appears at 65-80 (AGQERFRTITSSYYRG). Glycine 66 serves as a coordination point for GTP. Serine 76 bears the (Microbial infection) O-(2-cholinephosphoryl)serine mark. Tyrosine 77 is modified ((Microbial infection) O-AMP-tyrosine). GTP-binding residues include asparagine 121, lysine 122, aspartate 124, serine 151, alanine 152, and lysine 153. The segment at 174–201 (GPGAASGGERPNLKIDSTPVKPAGGGCC) is disordered. Residues cysteine 200 and cysteine 201 are each lipidated (S-geranylgeranyl cysteine). Cysteine 201 is subject to Cysteine methyl ester.

It belongs to the small GTPase superfamily. Rab family. Interacts with MICAL1 and MICAL2. Interacts (in GTP-bound form) with MICALCL, MICAL1 and MILCAL3. Interacts with GDI1; the interaction requires the GDP-bound state. Interacts with CHM/REP1; the interaction requires the GDP-bound form and is necessary for prenylation by GGTase II. Interacts with RabGAP TBC1D20. Interacts (in GDP-bound form) with lipid phosphatase MTMR6 (via GRAM domain); the interaction regulates MTMR6 recruitment to the endoplasmic reticulum-Golgi intermediate compartment. Interacts (in GDP-bound form) with lipid phosphatase MTMR7. As to quaternary structure, (Microbial infection) Interacts with L.pneumophila AnkX. Interacts with L.pneumophila Lem3. Interacts with L.pneumophila SidD. Interacts with L.pneumophila DrrA. It depends on Mg(2+) as a cofactor. Post-translationally, prenylated; by GGTase II, only after interaction of the substrate with Rab escort protein 1 (REP1). In terms of processing, (Microbial infection) AMPylation at Tyr-77 by L.pneumophila DrrA occurs in the switch 2 region and leads to moderate inactivation of the GTPase activity. It appears to prolong the lifetime of the GTP state of RAB1B by restricting access of GTPase effectors to switch 2 and blocking effector-stimulated GTP hydrolysis, thereby rendering RAB1B constitutively active. It is later de-AMPylated by L.pneumophila SidD, releasing RAB1B from bacterial phagosomes. (Microbial infection) Phosphocholinated at Ser-76 by L.pneumophila AnkX, leading to displace GDP dissociation inhibitors (GDI). Both GDP-bound and GTP-bound forms can be phosphocholinated. Dephosphocholinated by L.pneumophila Lem3, restoring accessibility to L.pneumophila GTPase effector LepB. Post-translationally, (Microbial infection) Glycosylated by S.typhimurium protein Ssek3: arginine GlcNAcylation prevents GTPase activity, thereby disrupting vesicular protein transport from the endoplasmic reticulum (ER) to the Golgi compartment.

The protein resides in the cytoplasm. It is found in the membrane. Its subcellular location is the preautophagosomal structure membrane. It localises to the perinuclear region. The catalysed reaction is GTP + H2O = GDP + phosphate + H(+). With respect to regulation, regulated by guanine nucleotide exchange factors (GEFs) which promote the exchange of bound GDP for free GTP. Regulated by GTPase activating proteins (GAPs) including TBC1D20 which increases the GTP hydrolysis activity. Inhibited by GDP dissociation inhibitors (GDIs). Its function is as follows. The small GTPases Rab are key regulators of intracellular membrane trafficking, from the formation of transport vesicles to their fusion with membranes. Rabs cycle between an inactive GDP-bound form and an active GTP-bound form that is able to recruit to membranes different set of downstream effectors directly responsible for vesicle formation, movement, tethering and fusion. Plays a role in the initial events of the autophagic vacuole development which take place at specialized regions of the endoplasmic reticulum. Regulates vesicular transport between the endoplasmic reticulum and successive Golgi compartments. Required to modulate the compacted morphology of the Golgi. Promotes the recruitment of lipid phosphatase MTMR6 to the endoplasmic reticulum-Golgi intermediate compartment. In Homo sapiens (Human), this protein is Ras-related protein Rab-1B.